Consider the following 630-residue polypeptide: MGFRFSDYDVIVVGGGHAGAEAALAAARMGEHTLLITQTIDSIGRLSCNPSIGGISKGNIVREIDALGGEMGKFADACMIQYRLLNKSRGPAVQAPRIQADKFLYAQKVKYTLECTQHLHLYQDTVVDVVCSNTTDAGYVAYGAAHAVVTARGRRISARAVVLTTGTFMEGRVYIGEYEAPEGRLGEHAAEGLGAALRKKGFQMGRLKTGTPARVLRKSVDLSVMEKQEADAIMRPFSFAHVEINRPHADCYINYTNERTHQLIRENFHRSPFFSGRIKAVGTRYCPSIEDKVRKFPDRIRHQLYIEPEGLDTEELYINGLSSCLPEDIQDEMIRTIPGMERAVITRPAYAVDYAVLFPVQLGIDLQTKRVSGLFSAGQINGTSGYEEAGGQGIIAGINAALYARSTKTKEEYHPFVLKRDEAYIGVMIDDLVTQGIDEPYRMFTARAEYRLKLRHDTADERLTEKAYAIGLQKKSAVETLQKKMRTKHEILHLLQTNKVSLTHANAYVQLKPHIGKSFAATLRDPVIPLGLIASLNEQIAQFPLEVFQSVGVEIRYEHYIAAQDQRIAQVEKMEGIKIPAHFDYARISGLSVESRTRLEHVRPDTIGQVGRMRGIRPSDVMLLLAHLKR.

14 to 19 lines the FAD pocket; it reads GGGHAG. Residue 282-296 participates in NAD(+) binding; the sequence is GTRYCPSIEDKVRKF.

The protein belongs to the MnmG family. As to quaternary structure, homodimer. Heterotetramer of two MnmE and two MnmG subunits. It depends on FAD as a cofactor.

It localises to the cytoplasm. In terms of biological role, NAD-binding protein involved in the addition of a carboxymethylaminomethyl (cmnm) group at the wobble position (U34) of certain tRNAs, forming tRNA-cmnm(5)s(2)U34. The chain is tRNA uridine 5-carboxymethylaminomethyl modification enzyme MnmG from Treponema pallidum (strain Nichols).